We begin with the raw amino-acid sequence, 356 residues long: Phosphoserine aminotransferase (356 aa).

Arginine 41 is an L-glutamate binding site. Pyridoxal 5'-phosphate is bound by residues 76–77 (AS), tryptophan 102, threonine 150, aspartate 169, and glutamine 192. Lysine 193 carries the N6-(pyridoxal phosphate)lysine modification. Pyridoxal 5'-phosphate is bound at residue 234-235 (NT).

This sequence belongs to the class-V pyridoxal-phosphate-dependent aminotransferase family. SerC subfamily. As to quaternary structure, homodimer. Pyridoxal 5'-phosphate serves as cofactor.

Its subcellular location is the cytoplasm. The catalysed reaction is O-phospho-L-serine + 2-oxoglutarate = 3-phosphooxypyruvate + L-glutamate. It catalyses the reaction 4-(phosphooxy)-L-threonine + 2-oxoglutarate = (R)-3-hydroxy-2-oxo-4-phosphooxybutanoate + L-glutamate. Its pathway is amino-acid biosynthesis; L-serine biosynthesis; L-serine from 3-phospho-D-glycerate: step 2/3. It participates in cofactor biosynthesis; pyridoxine 5'-phosphate biosynthesis; pyridoxine 5'-phosphate from D-erythrose 4-phosphate: step 3/5. Functionally, catalyzes the reversible conversion of 3-phosphohydroxypyruvate to phosphoserine and of 3-hydroxy-2-oxo-4-phosphonooxybutanoate to phosphohydroxythreonine. The chain is Phosphoserine aminotransferase from Flavobacterium johnsoniae (strain ATCC 17061 / DSM 2064 / JCM 8514 / BCRC 14874 / CCUG 350202 / NBRC 14942 / NCIMB 11054 / UW101) (Cytophaga johnsonae).